The following is a 100-amino-acid chain: Replication restart protein PriB (100 aa).

Residues 1 to 100 (MTNRMELSGT…VLHADNITQI (100 aa)) form the SSB domain.

Belongs to the PriB family. In terms of assembly, homodimer. Interacts with PriA and DnaT. Component of the replication restart primosome. Primosome assembly occurs via a 'hand-off' mechanism. PriA binds to replication forks, subsequently PriB then DnaT bind; DnaT then displaces ssDNA to generate the helicase loading substrate.

Functionally, involved in the restart of stalled replication forks, which reloads the replicative helicase on sites other than the origin of replication; the PriA-PriB pathway is the major replication restart pathway. During primosome assembly it facilitates complex formation between PriA and DnaT on DNA; stabilizes PriA on DNA. Stimulates the DNA unwinding activity of PriA helicase. The chain is Replication restart protein PriB from Vibrio parahaemolyticus serotype O3:K6 (strain RIMD 2210633).